The following is a 394-amino-acid chain: MSKEKFERKKPHINVGTIGHVDHGKTTLTAAITTVLSKKYGGQARAFDQIDNAPEEKARGITINTSHVEYETPTRHYAHVDCPGHADYVKNMITGAAQMDGAILVVAATDGPMPQTREHILLARQVGVPYILVFLNKCDMVDDAELLELVEMEVRELLSQYDFPGDDTPIIQGSALKALEGDEAYQEKIVELANALDKYIPEPQRDIDKPFLLPIEDVFSISGRGTVVTGRVERGMIKTSDSVEIVGIKDTVTTTCTGIEMFRKLLDEGRAGENVGVLLRGIKREEIERGQVLAKPGSINPHTKFEAEVYILTKEEGGRHTPFFKGYRPQFYFRTTDVTGTIELPEGVEMVMPGDNIKMLVTLIHPIAMDDGLRFAIREGGRTVGAGVVAKVIK.

In terms of domain architecture, tr-type G spans 10 to 204; the sequence is KPHINVGTIG…ALDKYIPEPQ (195 aa). The G1 stretch occupies residues 19-26; sequence GHVDHGKT. Position 19 to 26 (19 to 26) interacts with GTP; it reads GHVDHGKT. Residue Thr26 participates in Mg(2+) binding. The G2 stretch occupies residues 60–64; the sequence is GITIN. Positions 81 to 84 are G3; that stretch reads DCPG. GTP-binding positions include 81 to 85 and 136 to 139; these read DCPGH and NKCD. The tract at residues 136 to 139 is G4; the sequence is NKCD. Residues 174–176 form a G5 region; the sequence is SAL.

It belongs to the TRAFAC class translation factor GTPase superfamily. Classic translation factor GTPase family. EF-Tu/EF-1A subfamily. In terms of assembly, monomer.

The protein resides in the cytoplasm. It carries out the reaction GTP + H2O = GDP + phosphate + H(+). In terms of biological role, GTP hydrolase that promotes the GTP-dependent binding of aminoacyl-tRNA to the A-site of ribosomes during protein biosynthesis. The polypeptide is Elongation factor Tu (Hamiltonella defensa subsp. Acyrthosiphon pisum (strain 5AT)).